A 173-amino-acid polypeptide reads, in one-letter code: Putative metal-dependent hydrolase BC_2708 (173 aa).

Zn(2+) is bound by residues histidine 65, histidine 156, and histidine 160.

It belongs to the metal hydrolase YfiT family. As to quaternary structure, homodimer. Zn(2+) is required as a cofactor.

It is found in the cytoplasm. Its function is as follows. Possible metal-dependent hydrolase. The polypeptide is Putative metal-dependent hydrolase BC_2708 (Bacillus cereus (strain ATCC 14579 / DSM 31 / CCUG 7414 / JCM 2152 / NBRC 15305 / NCIMB 9373 / NCTC 2599 / NRRL B-3711)).